Here is a 356-residue protein sequence, read N- to C-terminus: C-C chemokine receptor 1-like protein 1 (356 aa).

Topologically, residues 1-32 (MEIPAVTEPSYNTVAKNDFMSGFLCFSINVRA) are extracellular. The helical transmembrane segment at 33–60 (FGITVLTPLYSLVFIIGVIGHVLVVLVL) threads the bilayer. Residues 61–67 (IQHKRLR) are Cytoplasmic-facing. A helical membrane pass occupies residues 68–92 (NMTSIYLFNLAISDLVFLSTLPFWV). The Extracellular segment spans residues 93–108 (DYIMKGDWIFGNAMCK). Cysteines 107 and 184 form a disulfide. Residues 109 to 130 (FVSGFYYLGLYSDMFFITLLTI) traverse the membrane as a helical segment. Over 131 to 147 (DRYLAVVHVVFALRART) the chain is Cytoplasmic. Residues 148–172 (VTFGIISSIITWVLAALVSIPCLYV) traverse the membrane as a helical segment. The Extracellular segment spans residues 173-198 (FKSQMEFTYHTCRAILPRKSLIRFLR). The chain crosses the membrane as a helical span at residues 199–224 (FQALTMNILGLILPLLAMIICYTRII). The Cytoplasmic portion of the chain corresponds to 225–240 (NVLHRRPNKKKAKVMR). A helical membrane pass occupies residues 241–265 (LIFVITLLFFLLLAPYYLAAFVSAF). Topologically, residues 266–282 (EDVLFTPSCLRSQQVDL) are extracellular. Residues 283 to 306 (SLMITEALAYTHCCVNPVIYVFVG) form a helical membrane-spanning segment. At 307-356 (KRFRKYLWQLFRRHTAITLPQWLPFLSVDRAQRASATPPSTVEIETSADL) the chain is on the cytoplasmic side.

Belongs to the G-protein coupled receptor 1 family. In terms of tissue distribution, detected in the spleen, liver and leukocytes.

The protein resides in the cell membrane. Functionally, probable receptor for a C-C type chemokine. The sequence is that of C-C chemokine receptor 1-like protein 1 (Ccr1l1) from Mus musculus (Mouse).